Consider the following 453-residue polypeptide: tRNA modification GTPase MnmE (453 aa).

(6S)-5-formyl-5,6,7,8-tetrahydrofolate contacts are provided by arginine 22, glutamate 79, and lysine 119. The region spanning 215–376 (GMKVVIAGRP…LRQHLKECMG (162 aa)) is the TrmE-type G domain. Asparagine 225 is a binding site for K(+). GTP contacts are provided by residues 225–230 (NAGKSS), 244–250 (TDIAGTT), 269–272 (DTAG), and 334–337 (NKAD). A Mg(2+)-binding site is contributed by serine 229. K(+) is bound by residues threonine 244, isoleucine 246, and threonine 249. Position 250 (threonine 250) interacts with Mg(2+). Lysine 453 is a binding site for (6S)-5-formyl-5,6,7,8-tetrahydrofolate.

This sequence belongs to the TRAFAC class TrmE-Era-EngA-EngB-Septin-like GTPase superfamily. TrmE GTPase family. In terms of assembly, homodimer. Heterotetramer of two MnmE and two MnmG subunits. The cofactor is K(+).

The protein resides in the cytoplasm. Functionally, exhibits a very high intrinsic GTPase hydrolysis rate. Involved in the addition of a carboxymethylaminomethyl (cmnm) group at the wobble position (U34) of certain tRNAs, forming tRNA-cmnm(5)s(2)U34. The sequence is that of tRNA modification GTPase MnmE from Vibrio cholerae serotype O1 (strain ATCC 39315 / El Tor Inaba N16961).